A 222-amino-acid chain; its full sequence is Glutathione S-transferase A6 (222 aa).

The GST N-terminal domain maps to 3–83 (EKPLFHYDEA…YFSSKYNLYG (81 aa)). Glutathione contacts are provided by residues Tyr-9, Arg-45, 54 to 55 (QV), and 67 to 68 (QT). In terms of domain architecture, GST C-terminal spans 85 to 208 (DMKERALIDM…QPGSQRQPPV (124 aa)).

The protein belongs to the GST superfamily. Alpha family. Homodimer or heterodimer of GSTA1 and GSTA2.

It is found in the cytoplasm. It carries out the reaction RX + glutathione = an S-substituted glutathione + a halide anion + H(+). Functionally, conjugation of reduced glutathione to a wide number of exogenous and endogenous hydrophobic electrophiles. In Rattus norvegicus (Rat), this protein is Glutathione S-transferase A6 (Gsta6).